The chain runs to 160 residues: Transcription elongation factor GreA (160 aa).

Residues 49–77 (SEYQSAKDEQAFVEGRIQTLKNMIDNAEI) are a coiled coil.

The protein belongs to the GreA/GreB family.

In terms of biological role, necessary for efficient RNA polymerase transcription elongation past template-encoded arresting sites. The arresting sites in DNA have the property of trapping a certain fraction of elongating RNA polymerases that pass through, resulting in locked ternary complexes. Cleavage of the nascent transcript by cleavage factors such as GreA or GreB allows the resumption of elongation from the new 3'terminus. GreA releases sequences of 2 to 3 nucleotides. In Leuconostoc mesenteroides subsp. mesenteroides (strain ATCC 8293 / DSM 20343 / BCRC 11652 / CCM 1803 / JCM 6124 / NCDO 523 / NBRC 100496 / NCIMB 8023 / NCTC 12954 / NRRL B-1118 / 37Y), this protein is Transcription elongation factor GreA.